Consider the following 118-residue polypeptide: UPF0102 protein NE0711 (118 aa).

It belongs to the UPF0102 family.

This Nitrosomonas europaea (strain ATCC 19718 / CIP 103999 / KCTC 2705 / NBRC 14298) protein is UPF0102 protein NE0711.